The sequence spans 253 residues: Trypsin beta (253 aa).

Positions 1–22 are cleaved as a signal peptide; sequence MLKFVILLSAVACALGGTIPEG. Positions 23–30 are cleaved as a propeptide — activation peptide; the sequence is LLPQLDGR. The Peptidase S1 domain occupies 31 to 253; that stretch reads IVGGTATTIS…DLRSWVINNA (223 aa). Cys-56 and Cys-72 are oxidised to a cystine. Active-site charge relay system residues include His-71 and Asp-116. Cystine bridges form between Cys-180/Cys-197 and Cys-206/Cys-230. Ser-210 serves as the catalytic Charge relay system.

This sequence belongs to the peptidase S1 family.

It localises to the secreted. Its subcellular location is the extracellular space. The catalysed reaction is Preferential cleavage: Arg-|-Xaa, Lys-|-Xaa.. This Drosophila erecta (Fruit fly) protein is Trypsin beta (betaTry).